We begin with the raw amino-acid sequence, 199 residues long: dITP/XTP pyrophosphatase (199 aa).

Residue 7-12 coordinates substrate; sequence TGNAGK. The Mg(2+) site is built by Glu-37 and Asp-66. Asp-66 acts as the Proton acceptor in catalysis. Substrate contacts are provided by residues Ser-67, 146–149, Lys-169, and 174–175; these read FGYD and HR.

It belongs to the HAM1 NTPase family. Homodimer. It depends on Mg(2+) as a cofactor.

The enzyme catalyses XTP + H2O = XMP + diphosphate + H(+). The catalysed reaction is dITP + H2O = dIMP + diphosphate + H(+). It carries out the reaction ITP + H2O = IMP + diphosphate + H(+). Its function is as follows. Pyrophosphatase that catalyzes the hydrolysis of nucleoside triphosphates to their monophosphate derivatives, with a high preference for the non-canonical purine nucleotides XTP (xanthosine triphosphate), dITP (deoxyinosine triphosphate) and ITP. Seems to function as a house-cleaning enzyme that removes non-canonical purine nucleotides from the nucleotide pool, thus preventing their incorporation into DNA/RNA and avoiding chromosomal lesions. The sequence is that of dITP/XTP pyrophosphatase from Deinococcus geothermalis (strain DSM 11300 / CIP 105573 / AG-3a).